The following is a 343-amino-acid chain: Tumor necrosis factor receptor superfamily member wgn (343 aa).

Disordered regions lie at residues 1 to 44 (MMPP…IGGS) and 74 to 96 (SSAANTDIAPPDPPPVSQVSIAS). Residues 1-76 (MMPPRLPGGH…ATSASSSSSA (76 aa)) form the signal peptide. Residues 13 to 24 (AMRSRSSSSGHH) are compositionally biased toward low complexity. Residues 29–39 (FHKRRRRRQQH) show a composition bias toward basic residues. Residues 77 to 201 (ANTDIAPPDP…AAWVLDWQTG (125 aa)) lie on the Extracellular side of the membrane. The TNFR-Cys repeat unit spans residues 99–137 (PCAPQHWWDSQRDRCTPCTRCQGEMIPLRPCQLHTDTIC). Disulfide bonds link Cys-100/Cys-113, Cys-116/Cys-129, and Cys-119/Cys-137. Residues 202–222 (VLYVAVLTCLVFFSVAACILI) form a helical membrane-spanning segment. At 223-343 (HHMRQWRRME…GVRGCSGLKG (121 aa)) the chain is on the cytoplasmic side. Residues 225–257 (MRQWRRMERRLDQDVEELSTKLMAKLAEVQSLD) adopt a coiled-coil conformation.

Monomer. Interacts (via extracellular cystein-rich domain) with egr (via secreted TNF-homology soluble form); forms heterohexamers when 3 copies associate with egr trimers. Interacts with Traf6. Interacts with Moe. Expressed in the adult midgut; under normal conditions expressed at higher levels than the other TNF receptor grnd.

It is found in the cell membrane. Its subcellular location is the cytoplasmic vesicle membrane. Receptor for egr. Involved in induction of apoptosis by triggering JNK signaling. Mediates the tumor suppressor activity of egr which eliminates oncogenic cells from epithelia, thereby maintaining epithelial integrity. Following UV-induced epidermal damage, binds to egr released from apoptotic epidermal cells and plays a role in development of thermal allodynia, a responsiveness to subthreshold thermal stimuli which are not normally perceived as noxious. Together with Moe, involved in control of axon targeting of R8 and R2-R5 photoreceptors, independent of egr. The sequence is that of Tumor necrosis factor receptor superfamily member wgn from Drosophila melanogaster (Fruit fly).